The chain runs to 373 residues: Probable G-protein coupled receptor 173 (373 aa).

Over 1 to 26 (MANTTGEPEEVSGALSPPSAVAYVKL) the chain is Extracellular. Residue asparagine 3 is glycosylated (N-linked (GlcNAc...) asparagine). Residues 27-47 (VLLGLIMCVSLAGNAILSLLV) traverse the membrane as a helical segment. The Cytoplasmic portion of the chain corresponds to 48–59 (LKDRALHKAPYY). Residues 60 to 80 (FLLDLCLADGIRSAVCFPFVL) form a helical membrane-spanning segment. Residues 81-97 (ASVRHGSSWTFSALSCK) lie on the Extracellular side of the membrane. The cysteines at positions 96 and 174 are disulfide-linked. The chain crosses the membrane as a helical span at residues 98 to 118 (IVAFMAVLFCFHAAFMLFCIS). Residues 119–139 (VTRYMAIAHHRFYAKRMTLWT) are Cytoplasmic-facing. The helical transmembrane segment at 140-160 (CAAVICMAWTLSVAMAFPPVF) threads the bilayer. The Extracellular segment spans residues 161-188 (DVGTYKFIREEDQCIFEHRYFKANDTLG). The N-linked (GlcNAc...) asparagine glycan is linked to asparagine 184. A helical membrane pass occupies residues 189–209 (FMLMLAVLMAATHAVYGKLLL). Over 210-287 (FEYRHRKMKP…VKGEKQLGRM (78 aa)) the chain is Cytoplasmic. A helical transmembrane segment spans residues 288 to 308 (FYAITLLFLLLWSPYIVACYW). The Extracellular portion of the chain corresponds to 309–322 (RVFVKACAVPHRYL). A helical membrane pass occupies residues 323 to 343 (ATAVWMSFAQAAVNPIVCFLL). Residues 344–373 (NKDLKKCLRTHAPCWGTGGAPAPREPYCVM) lie on the Cytoplasmic side of the membrane.

It belongs to the G-protein coupled receptor 1 family.

The protein localises to the cell membrane. Is a receptor for the SMIM20 derived peptides Phoenixin-14 and Phoenixin-20. It mediates the Phoenixin-14 and Phoenixin-20 augmentation of gonadotropin-releasing hormone (GNRH) signaling in the hypothalamus and pituitary gland. In the ovary, it mediates the effects of Phoenixin-14 and Phoenixin-20 induced granulosa cell proliferation during follicular growth. The chain is Probable G-protein coupled receptor 173 (GPR173) from Bos taurus (Bovine).